The primary structure comprises 1787 residues: Chromodomain-helicase-DNA-binding protein 3 homolog (1787 aa).

Disordered regions lie at residues M1 to Y80 and P170 to G258. Residues D10 to E43 are compositionally biased toward acidic residues. Residues P56–K71 are compositionally biased toward basic residues. Residues D192–A243 show a composition bias toward basic and acidic residues. 2 consecutive PHD-type zinc fingers follow at residues Q265–H312 and M328–P375. 2 Chromo domains span residues I373–S476 and M501–E583. One can recognise a Helicase ATP-binding domain in the interval R628 to D812. D641–T648 serves as a coordination point for ATP. A DEAH box motif is present at residues D763–H766. The 164-residue stretch at L944–D1107 folds into the Helicase C-terminal domain. Disordered regions lie at residues E1120–Q1141, T1186–N1212, E1248–S1295, and R1754–Y1787. A compositionally biased stretch (acidic residues) spans D1190–T1199. The segment covering E1248–Q1261 has biased composition (polar residues). The span at T1761–I1773 shows a compositional bias: basic and acidic residues.

This sequence belongs to the SNF2/RAD54 helicase family. As to expression, expressed in the head and vulva.

The protein localises to the nucleus. The catalysed reaction is ATP + H2O = ADP + phosphate + H(+). In terms of biological role, ATP-dependent chromatin-remodeling factor that has a role in notch signaling-dependent vulval cell fate determination. May also have a role in pharyngeal precursor cell specification. This is Chromodomain-helicase-DNA-binding protein 3 homolog (chd-3) from Caenorhabditis elegans.